Here is a 383-residue protein sequence, read N- to C-terminus: Dimethylsulfoniopropionate lyase 3 (383 aa).

This sequence belongs to the aspartate/glutamate racemases family. ALMA1 subfamily. As to quaternary structure, homotetramer.

The enzyme catalyses S,S-dimethyl-beta-propiothetin = acrylate + dimethyl sulfide + H(+). In terms of biological role, mediates cleavage of dimethylsulfoniopropionate (DMSP) into dimethyl sulfide (DMS) and acrylate. DMS is the principal form by which sulfur is transported from oceans to the atmosphere and is a key component of the ocean sulfur cycle. The protein is Dimethylsulfoniopropionate lyase 3 of Emiliania huxleyi (strain CCMP1516).